A 177-amino-acid chain; its full sequence is Large ribosomal subunit protein uL6 (177 aa).

The protein belongs to the universal ribosomal protein uL6 family. In terms of assembly, part of the 50S ribosomal subunit.

This protein binds to the 23S rRNA, and is important in its secondary structure. It is located near the subunit interface in the base of the L7/L12 stalk, and near the tRNA binding site of the peptidyltransferase center. The chain is Large ribosomal subunit protein uL6 from Pseudomonas putida (strain ATCC 700007 / DSM 6899 / JCM 31910 / BCRC 17059 / LMG 24140 / F1).